Here is a 462-residue protein sequence, read N- to C-terminus: NAD-capped RNA hydrolase NUDT12 (462 aa).

Lys10 is subject to N6-succinyllysine. ANK repeat units follow at residues 11 to 40, 45 to 74, and 78 to 98; these read EMIS…SLLN, NGWT…DRSL, and ARQT…ANLL. Position 185 is an N6-succinyllysine (Lys185). Zn(2+) is bound by residues Cys284 and Cys287. Lys292 carries the post-translational modification N6-succinyllysine. Zn(2+) contacts are provided by Cys302 and Cys307. Substrate contacts are provided by residues Tyr318, 354–356, Glu370, Glu374, and Glu415; that span reads AGF. Positions 319–453 constitute a Nudix hydrolase domain; it reads PRVDPVVIMQ…SRAIAHQLIK (135 aa). Residues Ala354, Glu370, Glu374, and Glu415 each coordinate Mg(2+). A Nudix box motif is present at residues 355–376; it reads GFIEPGETIEDAVRREVEEESG. Residues 460–462 carry the Microbody targeting signal motif; the sequence is PNL.

It belongs to the Nudix hydrolase family. NudC subfamily. In terms of assembly, homodimer. Homodimerization is essential for its catalytic activity and protein stability. Interacts (via ANK repeats) with BLMH. Mg(2+) serves as cofactor. Requires Zn(2+) as cofactor. As to expression, expressed abundantly in the liver and kidney.

Its subcellular location is the cytoplasm. It localises to the peroxisome. The protein resides in the cytoplasmic granule. The enzyme catalyses a 5'-end NAD(+)-phospho-ribonucleoside in mRNA + H2O = a 5'-end phospho-adenosine-phospho-ribonucleoside in mRNA + beta-nicotinamide D-ribonucleotide + 2 H(+). It catalyses the reaction NAD(+) + H2O = beta-nicotinamide D-ribonucleotide + AMP + 2 H(+). The catalysed reaction is NADH + H2O = reduced beta-nicotinamide D-ribonucleotide + AMP + 2 H(+). It carries out the reaction NADPH + H2O = reduced beta-nicotinamide D-ribonucleotide + adenosine 2',5'-bisphosphate + 2 H(+). Functionally, mRNA decapping enzyme that specifically removes the nicotinamide adenine dinucleotide (NAD) cap from a subset of mRNAs by hydrolyzing the diphosphate linkage to produce nicotinamide mononucleotide (NMN) and 5' monophosphate mRNA. The NAD-cap is present at the 5'-end of some RNAs; in contrast to the canonical N7 methylguanosine (m7G) cap, the NAD cap promotes mRNA decay. Preferentially acts on NAD-capped transcripts in response to nutrient stress. Also acts on free nicotinamide adenine dinucleotide molecules: hydrolyzes NAD(H) into NMN(H) and AMP, and NADPH into NMNH and 2',5'-ADP. May act to regulate the concentration of peroxisomal nicotinamide nucleotide cofactors required for oxidative metabolism in this organelle. Regulates the levels of circadian clock components PER1, PER2, PER3 and CRY2 in the liver. The chain is NAD-capped RNA hydrolase NUDT12 from Mus musculus (Mouse).